Here is a 62-residue protein sequence, read N- to C-terminus: Photosystem II reaction center protein Z (62 aa).

The next 2 membrane-spanning stretches (helical) occupy residues 8–28 and 41–61; these read AVFA…VVFS and FSGT…NSLI.

The protein belongs to the PsbZ family. In terms of assembly, PSII is composed of 1 copy each of membrane proteins PsbA, PsbB, PsbC, PsbD, PsbE, PsbF, PsbH, PsbI, PsbJ, PsbK, PsbL, PsbM, PsbT, PsbY, PsbZ, Psb30/Ycf12, at least 3 peripheral proteins of the oxygen-evolving complex and a large number of cofactors. It forms dimeric complexes.

It localises to the plastid. Its subcellular location is the chloroplast thylakoid membrane. May control the interaction of photosystem II (PSII) cores with the light-harvesting antenna, regulates electron flow through the 2 photosystem reaction centers. PSII is a light-driven water plastoquinone oxidoreductase, using light energy to abstract electrons from H(2)O, generating a proton gradient subsequently used for ATP formation. In Populus alba (White poplar), this protein is Photosystem II reaction center protein Z.